The following is a 224-amino-acid chain: Prolactin-3D1 (224 aa).

The N-terminal stretch at 1 to 29 (MQLTLNLSGSAGMQLLLLVSSLLLWENVS) is a signal peptide. Cystine bridges form between C81–C199 and C216–C224. Residues N109 and N158 are each glycosylated (N-linked (GlcNAc...) asparagine).

This sequence belongs to the somatotropin/prolactin family.

It localises to the secreted. The protein is Prolactin-3D1 (Prl3d1) of Mus musculus (Mouse).